Consider the following 275-residue polypeptide: Protein rolling stone (275 aa).

A run of 6 helical transmembrane segments spans residues 45–65 (LLYR…CVIV), 72–92 (FFIY…LISA), 127–147 (WLYN…WVFL), 162–182 (IITH…IAFP), 185–205 (ILHM…TLIY), and 232–252 (MVTF…LFGL).

In terms of tissue distribution, expressed in cells of the somatic mesoderm, most notably the muscle founder cells, between embryonic stages 12 and 14, in growing muscle fibers in dorsal, lateral and ventral positions. At stage 16 strongest expression is in some ventral muscles and muscle 8. At stages 16/17 expression is restricted to some cells of the CNS, the brain and the gonads.

The protein localises to the membrane. Its function is as follows. May have a central role in the fusion process during myogenesis, within the somatic mesoderm. The chain is Protein rolling stone (rost) from Drosophila melanogaster (Fruit fly).